The sequence spans 268 residues: Probable intron-encoded DNA endonuclease 1 (268 aa).

The protein belongs to the LAGLIDADG endonuclease family.

It localises to the mitochondrion. Functionally, mitochondrial DNA endonuclease involved in intron homing. This is Probable intron-encoded DNA endonuclease 1 (hegI1) from Mycosarcoma maydis (Corn smut fungus).